A 76-amino-acid chain; its full sequence is uncharacterized protein (76 aa).

A helical transmembrane segment spans residues 20–42 (GIVWGPKLAPWGITLGLGAFYFF).

It localises to the membrane. This is an uncharacterized protein from Dictyostelium discoideum (Social amoeba).